The following is a 96-amino-acid chain: Large ribosomal subunit protein uL23 (96 aa).

The protein belongs to the universal ribosomal protein uL23 family. Part of the 50S ribosomal subunit. Contacts protein L29, and trigger factor when it is bound to the ribosome.

Functionally, one of the early assembly proteins it binds 23S rRNA. One of the proteins that surrounds the polypeptide exit tunnel on the outside of the ribosome. Forms the main docking site for trigger factor binding to the ribosome. This is Large ribosomal subunit protein uL23 from Clostridium novyi (strain NT).